The chain runs to 90 residues: Succinate dehydrogenase subunit 7, mitochondrial (90 aa).

The N-terminal 41 residues, 1–41 (MAQPAFLSALRSRLRSPQPQAPALPHLQPPRRGFHVELGAR), are a transit peptide targeting the mitochondrion.

In terms of assembly, component of complex II composed of eight subunits in plants: four classical SDH subunits SDH1, SDH2, SDH3 and SDH4 (a flavoprotein (FP), an iron-sulfur protein (IP), and a cytochrome b composed of a large and a small subunit.), as well as four subunits unknown in mitochondria from bacteria and heterotrophic eukaryotes.

The protein localises to the mitochondrion inner membrane. It participates in carbohydrate metabolism; tricarboxylic acid cycle. This is Succinate dehydrogenase subunit 7, mitochondrial from Oryza sativa subsp. japonica (Rice).